The sequence spans 827 residues: uncharacterized protein (827 aa).

The region spanning 12-82 (FDADFEAILN…DMDIGVLSTG (71 aa)) is the PAS 1 domain. One can recognise a PAC 1 domain in the interval 212-264 (LDVEFRLAAAEGGYSWYRSRAATRRAEDGSILRWYGTVEDIDDRRKMFEALKE). The 71-residue stretch at 265–335 (SEARFRAIAD…RVFYQAFDLR (71 aa)) folds into the PAS 2 domain. The PAC 2 domain occupies 338–390 (VRMEYRLKRAGGGSAWVIDIGQPRFASDGTFLGFVGIALDITERRNAEQERLL). One can recognise a GGDEF domain in the interval 428–561 (TRLAILCLDL…GGGTIVQYEP (134 aa)). The EAL domain occupies 570–820 (RQRMKVSLRH…QAMALLKSRS (251 aa)).

This is an uncharacterized protein from Sinorhizobium fredii (strain NBRC 101917 / NGR234).